Here is a 337-residue protein sequence, read N- to C-terminus: MTTLKPALRRAAVLLPIAAVASSLFPIQEASAQRALVTADGSSTVFPISEAVAEEFQKRNKNINVTVGVSGTGGGFKRFCNGEIDIANASRPIKKEEVEACRKKGIRYIELPVAFDALTVVVNKSNPVNSITTAELAKIFGRDAEKKTTNWRQVKSSFPNLPLRVYAPGTDSGTYDYFNEAILNKKGTRGDLTASEDDNILVQGVSRDRGGIGFFGFSYYEENKGKLKALAVVNSNGKAVMPSVQNVLNGTYDPLARPVFIYVSEQAAKKANVRSFVNFYLQNAGKLSREVGFVPLPAKAYTAATQRFRSNKTGTVFAGKSLVGGSIEDLLKAEGIN.

The N-terminal stretch at 1 to 30 (MTTLKPALRRAAVLLPIAAVASSLFPIQEA) is a signal peptide.

It belongs to the PstS family. In terms of processing, the N-terminus is blocked.

The protein resides in the cell inner membrane. Functionally, may be involved in the system for phosphate transport across the cytoplasmic membrane. In Synechococcus elongatus (strain ATCC 33912 / PCC 7942 / FACHB-805) (Anacystis nidulans R2), this protein is Protein SphX (sphX).